Reading from the N-terminus, the 454-residue chain is Photosystem II CP47 reaction center protein (454 aa).

Helical transmembrane passes span 6–26, 47–61, 86–102, 149–164, 183–198, and 403–418; these read MFVLPFMTRLGVTNSWGGWTI, IILSGLLFLAAIWHW, GIHLFLSGVLCFGFGAF, IAAGIVGILAGLFHLS, VLSSSIAAVFWAAFVV, and SFALLFFFGHIWHGAR.

The protein belongs to the PsbB/PsbC family. PsbB subfamily. As to quaternary structure, PSII is composed of 1 copy each of membrane proteins PsbA, PsbB, PsbC, PsbD, PsbE, PsbF, PsbH, PsbI, PsbJ, PsbK, PsbL, PsbM, PsbT, PsbX, PsbY, PsbZ, Psb30/Ycf12, at least 3 peripheral proteins of the oxygen-evolving complex and a large number of cofactors. It forms dimeric complexes. It depends on Binds multiple chlorophylls. PSII binds additional chlorophylls, carotenoids and specific lipids. as a cofactor.

It is found in the plastid. Its subcellular location is the chloroplast thylakoid membrane. In terms of biological role, one of the components of the core complex of photosystem II (PSII). It binds chlorophyll and helps catalyze the primary light-induced photochemical processes of PSII. PSII is a light-driven water:plastoquinone oxidoreductase, using light energy to abstract electrons from H(2)O, generating O(2) and a proton gradient subsequently used for ATP formation. This is Photosystem II CP47 reaction center protein from Ostreococcus tauri.